The sequence spans 671 residues: Pescadillo homolog (671 aa).

Residues 317 to 403 (KVRELFRGLT…LMLPVTGYRI (87 aa)) enclose the BRCT domain. Positions 548-584 (QALRKAQEKSRQTETSEARLQRKMSEVKRQEAATRKM) form a coiled coil. Disordered regions lie at residues 552–578 (KAQE…KRQE) and 643–671 (RRQR…KWVQ).

Belongs to the pescadillo family.

The protein resides in the nucleus. It is found in the nucleolus. The protein localises to the nucleoplasm. Functionally, required for maturation of ribosomal RNAs and formation of the large ribosomal subunit. In Leishmania infantum, this protein is Pescadillo homolog.